The sequence spans 234 residues: Adenosine 5'-phosphosulfate reductase (234 aa).

[4Fe-4S] cluster-binding residues include cysteine 120, cysteine 121, cysteine 203, and cysteine 206. Catalysis depends on cysteine 229, which acts as the Nucleophile; cysteine thiosulfonate intermediate.

This sequence belongs to the PAPS reductase family. CysH subfamily. It depends on [4Fe-4S] cluster as a cofactor.

It is found in the cytoplasm. The enzyme catalyses [thioredoxin]-disulfide + sulfite + AMP + 2 H(+) = adenosine 5'-phosphosulfate + [thioredoxin]-dithiol. It participates in sulfur metabolism; hydrogen sulfide biosynthesis; sulfite from sulfate. Functionally, catalyzes the formation of sulfite from adenosine 5'-phosphosulfate (APS) using thioredoxin as an electron donor. This chain is Adenosine 5'-phosphosulfate reductase, found in Bacillus cereus (strain Q1).